The chain runs to 429 residues: D-amino acid dehydrogenase (429 aa).

3–17 contributes to the FAD binding site; it reads VLILGSGVIGVTSAW.

This sequence belongs to the DadA oxidoreductase family. The cofactor is FAD.

The enzyme catalyses a D-alpha-amino acid + A + H2O = a 2-oxocarboxylate + AH2 + NH4(+). Functionally, oxidative deamination of D-amino acids. The polypeptide is D-amino acid dehydrogenase (Xanthomonas axonopodis pv. citri (strain 306)).